The primary structure comprises 600 residues: Dihydroxy-acid dehydratase (600 aa).

Asp82 serves as a coordination point for Mg(2+). Cys123 provides a ligand contact to [2Fe-2S] cluster. Mg(2+) contacts are provided by Asp124 and Lys125. An N6-carboxylysine modification is found at Lys125. Residue Cys192 coordinates [2Fe-2S] cluster. Glu489 lines the Mg(2+) pocket. The Proton acceptor role is filled by Ser515.

Belongs to the IlvD/Edd family. In terms of assembly, homodimer. The cofactor is [2Fe-2S] cluster. It depends on Mg(2+) as a cofactor.

It carries out the reaction (2R)-2,3-dihydroxy-3-methylbutanoate = 3-methyl-2-oxobutanoate + H2O. It catalyses the reaction (2R,3R)-2,3-dihydroxy-3-methylpentanoate = (S)-3-methyl-2-oxopentanoate + H2O. The protein operates within amino-acid biosynthesis; L-isoleucine biosynthesis; L-isoleucine from 2-oxobutanoate: step 3/4. It functions in the pathway amino-acid biosynthesis; L-valine biosynthesis; L-valine from pyruvate: step 3/4. Its function is as follows. Functions in the biosynthesis of branched-chain amino acids. Catalyzes the dehydration of (2R,3R)-2,3-dihydroxy-3-methylpentanoate (2,3-dihydroxy-3-methylvalerate) into 2-oxo-3-methylpentanoate (2-oxo-3-methylvalerate) and of (2R)-2,3-dihydroxy-3-methylbutanoate (2,3-dihydroxyisovalerate) into 2-oxo-3-methylbutanoate (2-oxoisovalerate), the penultimate precursor to L-isoleucine and L-valine, respectively. The protein is Dihydroxy-acid dehydratase of Bacteroides thetaiotaomicron (strain ATCC 29148 / DSM 2079 / JCM 5827 / CCUG 10774 / NCTC 10582 / VPI-5482 / E50).